We begin with the raw amino-acid sequence, 281 residues long: Bifunctional protein FolD (281 aa).

NADP(+) is bound by residues 165 to 167 (GRG), threonine 192, and valine 233.

It belongs to the tetrahydrofolate dehydrogenase/cyclohydrolase family. Homodimer.

The enzyme catalyses (6R)-5,10-methylene-5,6,7,8-tetrahydrofolate + NADP(+) = (6R)-5,10-methenyltetrahydrofolate + NADPH. It catalyses the reaction (6R)-5,10-methenyltetrahydrofolate + H2O = (6R)-10-formyltetrahydrofolate + H(+). It participates in one-carbon metabolism; tetrahydrofolate interconversion. Its function is as follows. Catalyzes the oxidation of 5,10-methylenetetrahydrofolate to 5,10-methenyltetrahydrofolate and then the hydrolysis of 5,10-methenyltetrahydrofolate to 10-formyltetrahydrofolate. In Mycolicibacterium paratuberculosis (strain ATCC BAA-968 / K-10) (Mycobacterium paratuberculosis), this protein is Bifunctional protein FolD.